Consider the following 885-residue polypeptide: DNA mismatch repair protein MutS (885 aa).

Residue 626-633 (GPNMGGKS) participates in ATP binding.

This sequence belongs to the DNA mismatch repair MutS family.

Functionally, this protein is involved in the repair of mismatches in DNA. It is possible that it carries out the mismatch recognition step. This protein has a weak ATPase activity. The polypeptide is DNA mismatch repair protein MutS (Burkholderia ambifaria (strain MC40-6)).